Reading from the N-terminus, the 380-residue chain is Histidinol-phosphate aminotransferase (380 aa).

An N6-(pyridoxal phosphate)lysine modification is found at Lys232.

This sequence belongs to the class-II pyridoxal-phosphate-dependent aminotransferase family. Histidinol-phosphate aminotransferase subfamily. Homodimer. The cofactor is pyridoxal 5'-phosphate.

The enzyme catalyses L-histidinol phosphate + 2-oxoglutarate = 3-(imidazol-4-yl)-2-oxopropyl phosphate + L-glutamate. It participates in amino-acid biosynthesis; L-histidine biosynthesis; L-histidine from 5-phospho-alpha-D-ribose 1-diphosphate: step 7/9. This Mycobacterium bovis (strain BCG / Pasteur 1173P2) protein is Histidinol-phosphate aminotransferase.